Here is a 185-residue protein sequence, read N- to C-terminus: Ribosome-recycling factor (185 aa).

This sequence belongs to the RRF family.

Its subcellular location is the cytoplasm. Functionally, responsible for the release of ribosomes from messenger RNA at the termination of protein biosynthesis. May increase the efficiency of translation by recycling ribosomes from one round of translation to another. The chain is Ribosome-recycling factor from Azotobacter vinelandii (strain DJ / ATCC BAA-1303).